Consider the following 469-residue polypeptide: Glutamine synthetase (469 aa).

The GS beta-grasp domain maps to 13 to 97 (NEVKFVDLRF…IRCDILEPAT (85 aa)). One can recognise a GS catalytic domain in the interval 105–469 (PRSIAKRAEE…PLEFELYYSV (365 aa)). Mg(2+)-binding residues include E130 and E132. E208 contributes to the ATP binding site. Mg(2+)-binding residues include E213 and E221. L-glutamate is bound by residues 265-266 (NG) and G266. Residue H270 coordinates Mg(2+). ATP is bound by residues 272–274 (HQS) and S274. L-glutamate is bound by residues R322, E328, and R340. Positions 340, 345, and 353 each coordinate ATP. E358 contacts Mg(2+). L-glutamate is bound at residue R360. At Y398 the chain carries O-AMP-tyrosine.

Belongs to the glutamine synthetase family. Oligomer of 12 subunits arranged in the form of two hexameric ring. Requires Mg(2+) as cofactor.

The protein resides in the cytoplasm. It catalyses the reaction L-glutamate + NH4(+) + ATP = L-glutamine + ADP + phosphate + H(+). The activity of this enzyme could be controlled by adenylation under conditions of abundant glutamine. In terms of biological role, catalyzes the ATP-dependent biosynthesis of glutamine from glutamate and ammonia. This Vibrio cholerae serotype O1 (strain ATCC 39315 / El Tor Inaba N16961) protein is Glutamine synthetase (glnAv).